The chain runs to 434 residues: Phosphomethylpyrimidine synthase (434 aa).

Residues asparagine 74, methionine 103, tyrosine 132, histidine 171, 193–195 (SRG), 234–237 (DGIR), and glutamate 273 contribute to the substrate site. Histidine 277 is a binding site for Zn(2+). Position 300 (tyrosine 300) interacts with substrate. Histidine 341 contributes to the Zn(2+) binding site. Residues cysteine 417, cysteine 420, and cysteine 424 each contribute to the [4Fe-4S] cluster site.

The protein belongs to the ThiC family. Homodimer. [4Fe-4S] cluster serves as cofactor.

It carries out the reaction 5-amino-1-(5-phospho-beta-D-ribosyl)imidazole + S-adenosyl-L-methionine = 4-amino-2-methyl-5-(phosphooxymethyl)pyrimidine + CO + 5'-deoxyadenosine + formate + L-methionine + 3 H(+). Its pathway is cofactor biosynthesis; thiamine diphosphate biosynthesis. Its function is as follows. Catalyzes the synthesis of the hydroxymethylpyrimidine phosphate (HMP-P) moiety of thiamine from aminoimidazole ribotide (AIR) in a radical S-adenosyl-L-methionine (SAM)-dependent reaction. This Desulfotalea psychrophila (strain LSv54 / DSM 12343) protein is Phosphomethylpyrimidine synthase.